The sequence spans 484 residues: Maintenance of mitochondrial morphology protein 1 (484 aa).

Residues 1–22 (MSFQQSETVPVPAQSSLSFTQG) lie on the Lumenal side of the membrane. The helical transmembrane segment at 23–43 (FLLGQLSVVLLIGAFIKFFIF) threads the bilayer. Residues 44-484 (GEAPPPPSRG…PGSLSGAAAR (441 aa)) lie on the Cytoplasmic side of the membrane. Disordered stretches follow at residues 50–98 (PSRG…SSST), 272–319 (STPP…TGSP), and 388–484 (RTGV…AAAR). The segment covering 54-64 (LSHRASTHRRS) has biased composition (basic residues). 2 stretches are compositionally biased toward polar residues: residues 65-78 (NSIYTINHNEANNR) and 85-98 (SNSNVLRPVPSSST). The 251-residue stretch at 130–380 (QPESLDWFNV…EPRVQVVGLP (251 aa)) folds into the SMP-LTD domain. Over residues 272-286 (STPPLHTPSPSPSPP) the composition is skewed to pro residues. Residues 399 to 408 (TGSNAASRSA) show a composition bias toward polar residues. A compositionally biased stretch (basic and acidic residues) spans 413–427 (LGDHHLGDREPEGLR). Polar residues-rich tracts occupy residues 437–449 (QFDSVSRTSSYNV) and 466–476 (GALSEQFQMPG).

This sequence belongs to the MMM1 family. Homodimer. Component of the ER-mitochondria encounter structure (ERMES) or MDM complex, composed of mmm1, mdm10, mdm12 and mdm34. A mmm1 homodimer associates with one molecule of mdm12 on each side in a pairwise head-to-tail manner, and the SMP-LTD domains of mmm1 and mdm12 generate a continuous hydrophobic tunnel for phospholipid trafficking.

The protein localises to the endoplasmic reticulum membrane. Component of the ERMES/MDM complex, which serves as a molecular tether to connect the endoplasmic reticulum (ER) and mitochondria. Components of this complex are involved in the control of mitochondrial shape and protein biogenesis, and function in nonvesicular lipid trafficking between the ER and mitochondria. The mdm12-mmm1 subcomplex functions in the major beta-barrel assembly pathway that is responsible for biogenesis of all outer membrane beta-barrel proteins, and acts in a late step after the SAM complex. The mdm10-mdm12-mmm1 subcomplex further acts in the TOM40-specific pathway after the action of the mdm12-mmm1 complex. Essential for establishing and maintaining the structure of mitochondria and maintenance of mtDNA nucleoids. The chain is Maintenance of mitochondrial morphology protein 1 from Aspergillus niger (strain ATCC MYA-4892 / CBS 513.88 / FGSC A1513).